Here is a 599-residue protein sequence, read N- to C-terminus: Omega-hydroxyceramide transacylase (599 aa).

The region spanning 16–185 is the PNPLA domain; it reads ISFSGSGFLS…TSMQPCSFWT (170 aa). Positions 51–55 match the GXSXG motif; that stretch reads GTSAG. S53 acts as the Nucleophile in catalysis. The active-site Proton acceptor is D172. Residues 172-174 carry the DGA/G motif; that stretch reads DGG. The tract at residues 289-563 is disordered; sequence PPPPSLQNLP…PASKLKSAPC (275 aa). 2 stretches are compositionally biased toward polar residues: residues 325–335 and 350–362; these read SSAAPSVQTPE and VSISKQPSVSPLS. Over residues 443 to 454 the composition is skewed to low complexity; it reads SPESPRLLLRSS. The segment covering 468-478 has biased composition (pro residues); it reads PLSPSTPPAGP. Residues 490 to 501 show a composition bias toward polar residues; sequence ATGSPALSQLTG. Residues 551 to 563 show a composition bias toward low complexity; sequence SKKPASKLKSAPC.

Specifically expressed in skin by keratinocytes, at the boundary area between the nucleated stratum granulosum and the denucleated stratum corneum in the epidermis (at protein level). Also expressed in stomach and other surface lining tissues like intestine and tongue. Also detected in testis as well as in other tissues but at very low level.

The protein resides in the cytoplasm. It catalyses the reaction an N-(omega-hydroxy-ultra-long chain fatty acyl)-sphingoid base + a (9Z,12Z)-octadecadienoyl-containing triacyl-sn-glycerol = an N-[omega-(9Z,12Z-octadecadienoyloxy)-O-ultra-long chain fatty acyl]-sphingoid base + a diacylglycerol. The catalysed reaction is an N-(omega-hydroxy-ultra-long chain fatty acyl)-sphing-4-enine + a (9Z,12Z)-octadecadienoyl-containing triacyl-sn-glycerol = an N-(omega-(9Z,12Z-octadecadienoyloxy)-ultra-long chain fatty acyl)-sphing-4-enine + a diacylglycerol. It carries out the reaction N-(28-hydroxyoctacosanoyl)-sphing-4-enine + a (9Z,12Z)-octadecadienoyl-containing triacyl-sn-glycerol = N-(28-(9Z,12Z-octadecadienoyloxy)-octacosanoyl)-sphing-4-enine + a diacylglycerol. The enzyme catalyses N-(30-hydroxytriacontanoyl)-sphing-4-enine + 1,2,3-tri-(9Z,12Z)-octadecadienoylglycerol = N-[30-(9Z,12Z-octadecadienoyloxy)-triacontanoyl]-sphing-4-enine + di-(9Z,12Z)-octadecadienoylglycerol. It catalyses the reaction N-(32-hydroxydotriacontanoyl)-sphing-4-enine + a (9Z,12Z)-octadecadienoyl-containing triacyl-sn-glycerol = N-(32-(9Z,12Z-octadecadienoyloxy)-dotricontanoyl)-sphing-4-enine + a diacylglycerol. The catalysed reaction is N-(32-hydroxydotriacontenoyl)-sphing-4-enine + a (9Z,12Z)-octadecadienoyl-containing triacyl-sn-glycerol = an N-(32-(9Z,12Z-octadecadienoyloxy)-dotriacontenoyl)-sphing-4-enine + a diacylglycerol. It carries out the reaction an N-(34-hydroxytetratriacontenoyl)-sphing-4-enine + a (9Z,12Z)-octadecadienoyl-containing triacyl-sn-glycerol = an N-(34-(9Z,12Z-octadecadienoyloxy)-tetratriacontenoyl)-sphing-4-enine + a diacylglycerol. The enzyme catalyses an N-(34-hydroxytetratriacontadienoyl)-sphing-4-enine + a (9Z,12Z)-octadecadienoyl-containing triacyl-sn-glycerol = an N-(34-(9Z,12Z-octadecadienoyloxy)-tetratriacontadienoyl)-sphing-4-enine + a diacylglycerol. It catalyses the reaction an N-(36-hydroxyhexatriacontenoyl)-sphing-4-enine + a (9Z,12Z)-octadecadienoyl-containing triacyl-sn-glycerol = an N-(36-(9Z,12Z-octadecadienoyloxy)-hexatriacontenoyl)-sphing-4-enine + a diacylglycerol. The catalysed reaction is an N-(36-hydroxyhexatriacontadienoyl)-sphing-4-enine + a (9Z,12Z)-octadecadienoyl-containing triacyl-sn-glycerol = an N-(36-(9Z,12Z-octadecadienoyloxy)-hexatriacontadienoyl)-sphing-4-enine + a diacylglycerol. It carries out the reaction an N-(38-hydroxyoctatriacontenoyl)-sphing-4-enine + a (9Z,12Z)-octadecadienoyl-containing triacyl-sn-glycerol = an N-(38-(9Z,12Z-octadecadienoyloxy)-octatriacontenoyl)-sphing-4-enine + a diacylglycerol. Omega-hydroxyceramide transacylase involved in the synthesis of omega-O-acylceramides (esterified omega-hydroxyacyl-sphingosine; EOS), which are extremely hydrophobic lipids involved in skin barrier formation. Catalyzes the last step of the synthesis of omega-O-acylceramides by transferring linoleic acid from triglycerides to an omega-hydroxyceramide. Omega-O-acylceramides, are required for the biogenesis of lipid lamellae in the stratum corneum and the formation of the cornified lipid envelope which are essential for the epidermis barrier function. These lipids also play a role in keratinocyte differentiation. May also act on omega-hydroxylated ultra-long chain fatty acids (omega-OH ULCFA) and acylglucosylceramides (GlcEOS). The chain is Omega-hydroxyceramide transacylase from Mus musculus (Mouse).